We begin with the raw amino-acid sequence, 287 residues long: tRNA selenocysteine 1-associated protein 1 (287 aa).

RRM domains are found at residues 3–86 (ASLW…YVTY) and 96–175 (YSLF…VAIP).

This sequence belongs to the RRM TRSPAP family. As to quaternary structure, component of the tRNA(Sec) complex composed at least of EEFSEC, SECISBP2, SEPHS1, SEPSECS, TRNAU1AP and tRNA(Sec). Found in a complex with tRNA(Sec). Interacts with SEPSECS. Associates with mRNP and/or polysomes. Found in a complex with EEFSEC, SECISBP2, TRNAU1AP and tRNA(Sec).

Its subcellular location is the nucleus. It is found in the cytoplasm. Involved in the early steps of selenocysteine biosynthesis and tRNA(Sec) charging to the later steps resulting in the cotranslational incorporation of selenocysteine into selenoproteins. Stabilizes the SECISBP2, EEFSEC and tRNA(Sec) complex. May be involved in the methylation of tRNA(Sec). Enhances efficiency of selenoproteins synthesis. The polypeptide is tRNA selenocysteine 1-associated protein 1 (TRNAU1AP) (Pongo abelii (Sumatran orangutan)).